The sequence spans 234 residues: Endo-1,4-beta-xylanase 1 (234 aa).

The N-terminal stretch at 1–21 (MVSFIFTRIILFAAAINGAVA) is a signal peptide. Residues asparagine 25 and asparagine 75 are each glycosylated (N-linked (GlcNAc...) asparagine). The 197-residue stretch at 38–234 (SGTPSSTGYS…SSGFSSITVA (197 aa)) folds into the GH11 domain. Catalysis depends on glutamate 124, which acts as the Nucleophile. An N-linked (GlcNAc...) asparagine glycan is attached at asparagine 167. Catalysis depends on glutamate 221, which acts as the Proton donor.

The protein belongs to the glycosyl hydrolase 11 (cellulase G) family.

It localises to the secreted. The enzyme catalyses Endohydrolysis of (1-&gt;4)-beta-D-xylosidic linkages in xylans.. Its pathway is glycan degradation; xylan degradation. Endo-1,4-beta-xylanase involved in the hydrolysis of xylan, a major structural heterogeneous polysaccharide found in plant biomass representing the second most abundant polysaccharide in the biosphere, after cellulose. In Leucoagaricus gongylophorus (Leaf-cutting ant fungus), this protein is Endo-1,4-beta-xylanase 1 (Xyn1).